The following is a 41-amino-acid chain: Large ribosomal subunit protein bL36 (41 aa).

It belongs to the bacterial ribosomal protein bL36 family.

This Mesorhizobium japonicum (strain LMG 29417 / CECT 9101 / MAFF 303099) (Mesorhizobium loti (strain MAFF 303099)) protein is Large ribosomal subunit protein bL36.